Here is an 893-residue protein sequence, read N- to C-terminus: Translation initiation factor IF-2 (893 aa).

Positions methionine 1–glycine 266 are disordered. Positions proline 59–proline 70 are enriched in low complexity. The segment covering alanine 71–arginine 92 has biased composition (pro residues). Over residues proline 93–serine 104 the composition is skewed to low complexity. 2 stretches are compositionally biased toward basic and acidic residues: residues alanine 128 to serine 148 and alanine 155 to arginine 196. A compositionally biased stretch (low complexity) spans proline 197 to alanine 226. One can recognise a tr-type G domain in the interval proline 389–lysine 560. Positions glycine 398–threonine 405 are G1. Glycine 398–threonine 405 provides a ligand contact to GTP. A G2 region spans residues glycine 423–histidine 427. Residues aspartate 446–glycine 449 are G3. GTP-binding positions include aspartate 446–histidine 450 and asparagine 500–aspartate 503. The G4 stretch occupies residues asparagine 500–aspartate 503. A G5 region spans residues serine 536–lysine 538.

This sequence belongs to the TRAFAC class translation factor GTPase superfamily. Classic translation factor GTPase family. IF-2 subfamily.

The protein resides in the cytoplasm. Functionally, one of the essential components for the initiation of protein synthesis. Protects formylmethionyl-tRNA from spontaneous hydrolysis and promotes its binding to the 30S ribosomal subunits. Also involved in the hydrolysis of GTP during the formation of the 70S ribosomal complex. The sequence is that of Translation initiation factor IF-2 from Rhodopseudomonas palustris (strain BisA53).